The primary structure comprises 1371 residues: DNA-directed RNA polymerase subunit beta'' (1371 aa).

Cys220, Cys293, Cys300, and Cys303 together coordinate Zn(2+).

The protein belongs to the RNA polymerase beta' chain family. RpoC2 subfamily. In terms of assembly, in plastids the minimal PEP RNA polymerase catalytic core is composed of four subunits: alpha, beta, beta', and beta''. When a (nuclear-encoded) sigma factor is associated with the core the holoenzyme is formed, which can initiate transcription. Zn(2+) is required as a cofactor.

The protein resides in the plastid. The protein localises to the chloroplast. It catalyses the reaction RNA(n) + a ribonucleoside 5'-triphosphate = RNA(n+1) + diphosphate. In terms of biological role, DNA-dependent RNA polymerase catalyzes the transcription of DNA into RNA using the four ribonucleoside triphosphates as substrates. In Lobularia maritima (Sweet alyssum), this protein is DNA-directed RNA polymerase subunit beta''.